The primary structure comprises 209 residues: Thymidylate kinase (209 aa).

Glycine 10 to serine 17 is a binding site for ATP.

Belongs to the thymidylate kinase family.

The enzyme catalyses dTMP + ATP = dTDP + ADP. In terms of biological role, phosphorylation of dTMP to form dTDP in both de novo and salvage pathways of dTTP synthesis. This chain is Thymidylate kinase, found in Parasynechococcus marenigrum (strain WH8102).